The sequence spans 353 residues: Guanine nucleotide-binding protein subunit alpha (353 aa).

Positions 1–26 (MGCGMSVEEKEGKARNEEIENQLKRD) are disordered. Gly2 carries the N-myristoyl glycine lipid modification. Cys3 carries the S-palmitoyl cysteine lipid modification. Positions 7-26 (VEEKEGKARNEEIENQLKRD) are enriched in basic and acidic residues. The region spanning 32–353 (NEIKMLLLGA…QENLRLCGLI (322 aa)) is the G-alpha domain. Residues 35–48 (KMLLLGAGESGKST) are G1 motif. Residues Glu43, Ser44, Gly45, Lys46, Ser47, Thr48, Asp150, Leu175, Thr181, Gly203, Asn269, Lys270, Asp272, and Ala325 each contribute to the GTP site. Ser47 provides a ligand contact to Mg(2+). The interval 173–181 (DVLRSRVKT) is G2 motif. Thr181 is a binding site for Mg(2+). Residues 196 to 205 (YRMFDVGGQR) form a G3 motif region. The G4 motif stretch occupies residues 265–272 (ILFLNKID). Residues 323–328 (TCATDT) are G5 motif.

This sequence belongs to the G-alpha family. G(q) subfamily. G proteins are composed of 3 units; alpha, beta and gamma. The alpha chain contains the guanine nucleotide binding site. It depends on Mg(2+) as a cofactor.

Guanine nucleotide-binding proteins (G proteins) are involved as modulators or transducers in various transmembrane signaling systems. The sequence is that of Guanine nucleotide-binding protein subunit alpha (SSG-1) from Sporothrix schenckii (strain ATCC 58251 / de Perez 2211183) (Rose-picker's disease fungus).